Here is a 187-residue protein sequence, read N- to C-terminus: Oligoribonuclease (187 aa).

The Exonuclease domain occupies 7–170; it reads LCWLDMEMTG…DDILESIEEM (164 aa). Residue Tyr-128 is part of the active site.

Belongs to the oligoribonuclease family.

Its subcellular location is the cytoplasm. In terms of biological role, 3'-to-5' exoribonuclease specific for small oligoribonucleotides. This is Oligoribonuclease from Neisseria meningitidis serogroup B (strain ATCC BAA-335 / MC58).